Consider the following 538-residue polypeptide: MARAAALLPSRSPPTPLLWPLLLLLLLETGAQDVRVQVLPEVRGQLGGTVELPCHLLPPVPGLYISLVTWQRPDAPANHQNVAAFHPKMGPSFPSPKPGSERLSFVSAKQSTGQDTEAELQDATLALHGLTVEDEGNYTCEFATFPKGSVRGMTWLRVIAKPKNQAEAQKVTFSQDPTTVALCISKEGRPPARISWLSSLDWEAKETQVSGTLAGTVTVTSRFTLVPSGRADGVTVTCKVEHESFEEPALIPVTLSVRYPPEVSISGYDDNWYLGRTDATLSCDVRSNPEPTGYDWSTTSGTFPTSAVAQGSQLVIHAVDSLFNTTFVCTVTNAVGMGRAEQVIFVRETPNTAGAGATGGIIGGIIAAIIATAVAATGILICRQQRKEQTLQGAEEDEDLEGPPSYKPPTPKAKLEAQEMPSQLFTLGASEHSPLKTPYFDAGASCTEQEMPRYHELPTLEERSGPLHPGATSLGSPIPVPPGPPAVEDVSLDLEDEEGEEEEEYLDKINPIYDALSYSSPSDSYQGKGFVMSRAMYV.

The first 31 residues, 1 to 31, serve as a signal peptide directing secretion; the sequence is MARAAALLPSRSPPTPLLWPLLLLLLLETGA. One can recognise an Ig-like V-type domain in the interval 32-156; it reads QDVRVQVLPE…KGSVRGMTWL (125 aa). At 32 to 360 the chain is on the extracellular side; that stretch reads QDVRVQVLPE…NTAGAGATGG (329 aa). Disulfide bonds link C54/C140, C183/C238, and C283/C329. N-linked (GlcNAc...) asparagine glycosylation is present at N137. Ig-like C2-type domains lie at 162–256 and 261–345; these read PKNQ…VTLS and PEVS…QVIF. N324 carries N-linked (GlcNAc...) asparagine glycosylation. Residues 361-381 form a helical membrane-spanning segment; it reads IIGGIIAAIIATAVAATGILI. Topologically, residues 382–538 are cytoplasmic; it reads CRQQRKEQTL…GFVMSRAMYV (157 aa). Residues 390-414 form a disordered region; the sequence is TLQGAEEDEDLEGPPSYKPPTPKAK. At T410 the chain carries Phosphothreonine. 3 positions are modified to phosphoserine: S433, G465, and G470. The disordered stretch occupies residues 462–489; the sequence is ERSGPLHPGATSLGSPIPVPPGPPAVED.

It belongs to the nectin family. As to quaternary structure, can form trans-heterodimers with NECTIN3. Interacts with CD226 or with PVRIG; these interactions are competitive and have a differential functional outcome on T-cell activation, either positive or negative, respectively. Binds with low affinity to TIGIT. (Microbial infection) Interacts with herpes simplex virus 1 (HHV-1) mutant Rid1, herpes simplex virus 1 (HHV-2) and pseudorabies virus (PRV) envelope glycoprotein D. Ubiquitous.

The protein resides in the cell membrane. Modulator of T-cell signaling. Can be either a costimulator of T-cell function, or a coinhibitor, depending on the receptor it binds to. Upon binding to CD226, stimulates T-cell proliferation and cytokine production, including that of IL2, IL5, IL10, IL13, and IFNG. Upon interaction with PVRIG, inhibits T-cell proliferation. These interactions are competitive. Probable cell adhesion protein. Functionally, (Microbial infection) Acts as a receptor for herpes simplex virus 1 (HHV-1) mutant Rid1, herpes simplex virus 1 (HHV-2) and pseudorabies virus (PRV). This chain is Nectin-2, found in Homo sapiens (Human).